Consider the following 127-residue polypeptide: Large ribosomal subunit protein bL12 (127 aa).

This sequence belongs to the bacterial ribosomal protein bL12 family. Homodimer. Part of the ribosomal stalk of the 50S ribosomal subunit. Forms a multimeric L10(L12)X complex, where L10 forms an elongated spine to which 2 to 4 L12 dimers bind in a sequential fashion. Binds GTP-bound translation factors.

Its function is as follows. Forms part of the ribosomal stalk which helps the ribosome interact with GTP-bound translation factors. Is thus essential for accurate translation. The polypeptide is Large ribosomal subunit protein bL12 (Bordetella bronchiseptica (strain ATCC BAA-588 / NCTC 13252 / RB50) (Alcaligenes bronchisepticus)).